Consider the following 430-residue polypeptide: ETS domain-containing protein Elk-4 (430 aa).

The segment at residues 5 to 85 is a DNA-binding region (ETS); sequence ITLWQFLLQL…NGQKFVYKFV (81 aa). A compositionally biased stretch (basic and acidic residues) spans 116-127; sequence SKDVEYGGKERP. A disordered region spans residues 116–138; it reads SKDVEYGGKERPPQPGAKTSSRN. Lysine 166 is covalently cross-linked (Glycyl lysine isopeptide (Lys-Gly) (interchain with G-Cter in SUMO2)). Disordered regions lie at residues 245 to 279 and 292 to 325; these read TTFN…DIDT and PENL…KGLE. The span at 249-272 shows a compositional bias: pro residues; it reads PTPPVPSTPLPLKEPPRTPSPPLS. Residues 299–312 show a composition bias toward basic and acidic residues; that stretch reads PKNEDSALPEKDKT.

This sequence belongs to the ETS family. As to quaternary structure, interacts with SIRT7. In terms of tissue distribution, lung and liver.

It localises to the nucleus. Functionally, involved in both transcriptional activation and repression. Interaction with SIRT7 leads to recruitment and stabilization of SIRT7 at promoters, followed by deacetylation of histone H3 at 'Lys-18' (H3K18Ac) and subsequent transcription repression. Forms a ternary complex with the serum response factor (SRF). Requires DNA-bound SRF for ternary complex formation and makes extensive DNA contacts to the 5'side of SRF, but does not bind DNA autonomously. This chain is ETS domain-containing protein Elk-4 (Elk4), found in Mus musculus (Mouse).